A 548-amino-acid polypeptide reads, in one-letter code: 5-epi-aristolochene synthase 2 (548 aa).

Mg(2+) is bound by residues D301, D305, D444, T448, and E452. The short motif at 301–305 is the DDXXD motif element; the sequence is DDTFD.

This sequence belongs to the terpene synthase family. Monomer. Mg(2+) serves as cofactor. As to expression, expressed in roots, but not in shoots.

The protein localises to the cytoplasm. It catalyses the reaction (2E,6E)-farnesyl diphosphate = (+)-5-epi-aristolochene + diphosphate. The protein operates within secondary metabolite biosynthesis; terpenoid biosynthesis. Its function is as follows. Catalyzes the cyclization of trans,trans-farnesyl diphosphate (FPP) to the bicyclic intermediate 5-epi-aristolochene, initial step in the conversion of FPP to the sesquiterpenoid antifungal phytoalexin capsidiol. Produces germacrene A as an enzyme-bound intermediate that is not released by the enzyme, but is further cyclized to produce the bicyclic 5-epi-aristolochene. The protein is 5-epi-aristolochene synthase 2 of Nicotiana attenuata (Coyote tobacco).